The primary structure comprises 86 residues: MNIFRLFGKQRTAPAARERLQLLLAHERSSVGSDLVFLLREEILAVIEKHVQLDRDKVQVKMDCNEHVSTLEIDVEIPLNATVRAA.

This sequence belongs to the MinE family.

Its function is as follows. Prevents the cell division inhibition by proteins MinC and MinD at internal division sites while permitting inhibition at polar sites. This ensures cell division at the proper site by restricting the formation of a division septum at the midpoint of the long axis of the cell. The chain is Cell division topological specificity factor from Rhizobium rhizogenes (strain K84 / ATCC BAA-868) (Agrobacterium radiobacter).